We begin with the raw amino-acid sequence, 349 residues long: Core protein VP7 (349 aa).

N-linked (GlcNAc...) asparagine; by host glycosylation is found at N148 and N287.

This sequence belongs to the orbivirus VP7 family.

Its subcellular location is the virion. The VP7 protein is one of the five proteins (with VP1, VP3, VP4, and VP6) which form the inner capsid of the virus. The chain is Core protein VP7 (Segment-7) from Epizootic hemorrhagic disease virus 1 (EHDV-1).